A 423-amino-acid polypeptide reads, in one-letter code: MLVAVGLNQKGATVADREVLALPAEGFQSTLAEYAALDAVDEIAVMSTCYRVEIYAATRCPAAATLSLRQALNARAGRELPLFELHGEEAYRHLVRVASSLESAILGEPQILGQVKEAFQRSIDQGVAAKELTSVLNRALSAAKRVRTDTAIGRAGISWGHAAATLAEKVLGKMQGRRVVVVGAGEMARLSAQHLRDQGARIVVLNRTLVNGEALAREVGGVARPLEALGEELAQADVVVSAAPVAPDAFQPEAMAELSRSRKRPIVLVDLAVPRAIPAATGAIRDVYLCDVDDLDRVMKAAMSERAAAVADADRIIAEEVGKFVRAEAERRAAPLIQEMRTRASAIAREEVERTLRRLGEDPEVERRLEAMAGSIVSKILHAPSARLRQAVCDGCSGEALVSAAVEIFELSADIRVHRGNAA.

Residues 48 to 51 (TCYR), Ser-103, 108 to 110 (EPQ), and Gln-114 contribute to the substrate site. Cys-49 (nucleophile) is an active-site residue. NADP(+) is bound at residue 183 to 188 (GAGEMA).

It belongs to the glutamyl-tRNA reductase family. Homodimer.

It carries out the reaction (S)-4-amino-5-oxopentanoate + tRNA(Glu) + NADP(+) = L-glutamyl-tRNA(Glu) + NADPH + H(+). It functions in the pathway porphyrin-containing compound metabolism; protoporphyrin-IX biosynthesis; 5-aminolevulinate from L-glutamyl-tRNA(Glu): step 1/2. Catalyzes the NADPH-dependent reduction of glutamyl-tRNA(Glu) to glutamate 1-semialdehyde (GSA). The chain is Glutamyl-tRNA reductase 2 from Anaeromyxobacter sp. (strain Fw109-5).